Reading from the N-terminus, the 132-residue chain is Cytidine deaminase (132 aa).

In terms of domain architecture, CMP/dCMP-type deaminase spans M1–E128. Position 42–44 (N42–E44) interacts with substrate. C53 contributes to the Zn(2+) binding site. E55 functions as the Proton donor in the catalytic mechanism. Residues C86 and C89 each contribute to the Zn(2+) site.

Belongs to the cytidine and deoxycytidylate deaminase family. Requires Zn(2+) as cofactor.

It catalyses the reaction cytidine + H2O + H(+) = uridine + NH4(+). It carries out the reaction 2'-deoxycytidine + H2O + H(+) = 2'-deoxyuridine + NH4(+). In terms of biological role, this enzyme scavenges exogenous and endogenous cytidine and 2'-deoxycytidine for UMP synthesis. This is Cytidine deaminase (cdd) from Halalkalibacterium halodurans (strain ATCC BAA-125 / DSM 18197 / FERM 7344 / JCM 9153 / C-125) (Bacillus halodurans).